The primary structure comprises 588 residues: Proline--tRNA ligase (588 aa).

This sequence belongs to the class-II aminoacyl-tRNA synthetase family. ProS type 1 subfamily. As to quaternary structure, homodimer.

It localises to the cytoplasm. It carries out the reaction tRNA(Pro) + L-proline + ATP = L-prolyl-tRNA(Pro) + AMP + diphosphate. Catalyzes the attachment of proline to tRNA(Pro) in a two-step reaction: proline is first activated by ATP to form Pro-AMP and then transferred to the acceptor end of tRNA(Pro). As ProRS can inadvertently accommodate and process non-cognate amino acids such as alanine and cysteine, to avoid such errors it has two additional distinct editing activities against alanine. One activity is designated as 'pretransfer' editing and involves the tRNA(Pro)-independent hydrolysis of activated Ala-AMP. The other activity is designated 'posttransfer' editing and involves deacylation of mischarged Ala-tRNA(Pro). The misacylated Cys-tRNA(Pro) is not edited by ProRS. In Corynebacterium efficiens (strain DSM 44549 / YS-314 / AJ 12310 / JCM 11189 / NBRC 100395), this protein is Proline--tRNA ligase.